Here is a 1064-residue protein sequence, read N- to C-terminus: MYNNNGFHEETNIDESQFTVEKVETVLKSLYFPQNNDYSALPQIQQWLIQFQKSFSSWSIAPLLLMSNIKEIQYFGASTIENKIKNNWLSLSQDMKKEFLDNLLLFLKTQITKCSTVVITRLCLAVSVIACHSTTDLWANPILDVLQLSFQDINNLDCFNPNLVNLTLELLTIFPEELTNADYITQEKRNKVGLQFNKHNSKVFEILCKIMSLPQNQQTLIFMKSSLKCFKSWILFDCSPREYLIDSDLILKCFEAVSNNPKLVEDFLMVLDEMFTFMGGKIFRSYTSAFSLVLSRILMIFPSFYILALQEENQIFNQIFLLFSHIAENHIKTLLKNPELSNNFFKALIQMALKGDFETCELLSPVITEIAALHELHSTSSTTEATTTTIATTTTPTTTSDCDISGWYQYLGEMVEVFRLKSMYPLDKDISDLYEEDAEKFFAFRVIAGDSVLEVYNILEGKILQQLLNSLWSDIQSFPTTKCWQSIEATIYLLSCLSESITEDTEFVPQLFSILGQLPIQSTPLIKSTMTLAGNYSNLIDKSTIFLEKIVKDFFPAFENPDLKSVASQSFLSISKNSKCASILSNSITQLISLCAPILSNNNKILDDPSNFNILEALLYIISTLPSDSQVLNYSTQLLYPFILFIKNYYTNQLQQQQQQQQQQQTELRLLLSSINLLTKFCKIYDDEQVNEYGTTQQENNNNNNNNNNNNNNNNNNNNNNNNNNIKPVFEIINNIIPIYGELLSLNTLESSIIEAISIFYKKAIMINNNHQNITNIPEINRQLTLAFLKHKPLSLVLSTLSISIVNLPKEQHLDFLADSLSSISSKMIQIWSEKSNQNNKKNNKKINNNIDIDNDNENNNNNNQIQFENNELNEFKNLKISIYPDITKEYFTMITQYIRYNAVSIPQGVISHLFSIILVNITKIHDKVTARACFSFMALIITKSKEMKSQIKWEPLLNEINGWLSIHGELFIKQILYSAGGGIPRSVVQFISEVIASLVSSYPDVFRISALKCLSVDGFPSSNITKEQKEKFLNSLMLYRSKKLPLKIVTDFSLVSLGIATNQ.

An Importin N-terminal domain is found at 40–109 (ALPQIQQWLI…LDNLLLFLKT (70 aa)). Disordered regions lie at residues 695–722 (TTQQ…NNNN) and 839–860 (NNKK…NENN). Residues 700–722 (NNNNNNNNNNNNNNNNNNNNNNN) show a composition bias toward low complexity.

Belongs to the importin beta family. In terms of assembly, forms a complex with an importin alpha subunit.

It is found in the cytoplasm. The protein resides in the nucleus envelope. In terms of biological role, required for nuclear protein import and mediates docking of import substrate to distinct nucleoporins. This Dictyostelium discoideum (Social amoeba) protein is Importin-13 homolog A (ipo13A).